The sequence spans 352 residues: Histidinol-phosphate aminotransferase 1 (352 aa).

Position 211 is an N6-(pyridoxal phosphate)lysine (Lys211).

This sequence belongs to the class-II pyridoxal-phosphate-dependent aminotransferase family. Histidinol-phosphate aminotransferase subfamily. As to quaternary structure, homodimer. Pyridoxal 5'-phosphate serves as cofactor.

It catalyses the reaction L-histidinol phosphate + 2-oxoglutarate = 3-(imidazol-4-yl)-2-oxopropyl phosphate + L-glutamate. The protein operates within amino-acid biosynthesis; L-histidine biosynthesis; L-histidine from 5-phospho-alpha-D-ribose 1-diphosphate: step 7/9. In Haemophilus influenzae (strain 86-028NP), this protein is Histidinol-phosphate aminotransferase 1.